The following is a 451-amino-acid chain: CBL-interacting protein kinase 10 (451 aa).

Residues 13–267 (YEIGKLLGQG…VSEIMEDPWF (255 aa)) form the Protein kinase domain. Residues 19–27 (LGQGSFAKV) and K42 each bind ATP. The active-site Proton acceptor is D135. Positions 153–182 (DFGLSALAECKRQDGLLHTTCGTPAYVAPE) are activation loop. The NAF domain maps to 304–336 (INEGKQEAENLTSLNAFDIISLSSGFDLSAMFE). The PPI stretch occupies residues 341-370 (KEESKFTSTNTATTITKKLEDVAKNLRLKF).

This sequence belongs to the protein kinase superfamily. CAMK Ser/Thr protein kinase family. SNF1 subfamily. Mn(2+) is required as a cofactor.

The catalysed reaction is L-seryl-[protein] + ATP = O-phospho-L-seryl-[protein] + ADP + H(+). The enzyme catalyses L-threonyl-[protein] + ATP = O-phospho-L-threonyl-[protein] + ADP + H(+). CIPK serine-threonine protein kinases interact with CBL proteins. Binding of a CBL protein to the regulatory NAF domain of CIPK protein lead to the activation of the kinase in a calcium-dependent manner. This chain is CBL-interacting protein kinase 10 (CIPK10), found in Oryza sativa subsp. japonica (Rice).